A 503-amino-acid polypeptide reads, in one-letter code: Probable cytosol aminopeptidase (503 aa).

Mn(2+)-binding residues include K274 and D279. K286 is an active-site residue. Mn(2+) contacts are provided by D297, D356, and E358. The active site involves R360.

This sequence belongs to the peptidase M17 family. It depends on Mn(2+) as a cofactor.

The protein resides in the cytoplasm. It catalyses the reaction Release of an N-terminal amino acid, Xaa-|-Yaa-, in which Xaa is preferably Leu, but may be other amino acids including Pro although not Arg or Lys, and Yaa may be Pro. Amino acid amides and methyl esters are also readily hydrolyzed, but rates on arylamides are exceedingly low.. It carries out the reaction Release of an N-terminal amino acid, preferentially leucine, but not glutamic or aspartic acids.. Presumably involved in the processing and regular turnover of intracellular proteins. Catalyzes the removal of unsubstituted N-terminal amino acids from various peptides. In Burkholderia ambifaria (strain ATCC BAA-244 / DSM 16087 / CCUG 44356 / LMG 19182 / AMMD) (Burkholderia cepacia (strain AMMD)), this protein is Probable cytosol aminopeptidase.